An 801-amino-acid polypeptide reads, in one-letter code: Growth-differentiation transition protein 7 (801 aa).

The first 22 residues, 1–22 (MIKTILIKLILLVIFCYHFLFA), serve as a signal peptide directing secretion.

This sequence belongs to the GDT family.

It is found in the secreted. The polypeptide is Growth-differentiation transition protein 7 (gdt7) (Dictyostelium discoideum (Social amoeba)).